A 325-amino-acid polypeptide reads, in one-letter code: Polyprenyl transferase mpaA (325 aa).

The next 3 membrane-spanning stretches (helical) occupy residues 27–47 (MPYY…ALKL), 56–76 (VEYI…LCGA), and 108–128 (VEAL…LDLI). Residue N131 is glycosylated (N-linked (GlcNAc...) asparagine). 6 helical membrane passes run 134–151 (IWGL…YPYL), 159–179 (VFIY…ITGW), 192–212 (IFTH…YFNT), 240–260 (LFLA…VLKI), 262–282 (SPWL…MQIV), and 295–315 (IHWD…VEVG).

It belongs to the UbiA prenyltransferase family. Mg(2+) is required as a cofactor.

It is found in the golgi apparatus membrane. The catalysed reaction is 5,7-dihydroxy-4-methylphthalide + (2E,6E)-farnesyl diphosphate = 4-farnesyl-3,5-dihydroxy-6-methylphthalide + diphosphate. It participates in secondary metabolite biosynthesis; terpenoid biosynthesis. Its function is as follows. Polyprenyl transferase; part of the gene cluster that mediates the biosynthesis of mycophenolic acid (MPA), the first isolated antibiotic natural product in the world obtained from a culture of Penicillium brevicompactum in 1893. MpaA is a Golgi apparatus-associated enzyme that catalyzes the prenylation of 5,7-dihydroxy-4,6-dimethylphthalide (DHMP) to yield farnesyl-DHMP (FDHMP). The first step of the pathway is the synthesis of 5-methylorsellinic acid (5MOA) by the cytosolic polyketide synthase mpaC. 5MOA is then converted to the phthalide compound 5,7-dihydroxy-4,6-dimethylphthalide (DHMP) by the endoplasmic reticulum-bound cytochrome P450 monooxygenase mpaDE. MpaDE first catalyzes hydroxylation of 5-MOA to 4,6-dihydroxy-2-(hydroxymethyl)-3-methylbenzoic acid (DHMB). MpaDE then acts as a lactone synthase that catalyzes the ring closure to convert DHMB into DHMP. The next step is the prenylation of DHMP by the Golgi apparatus-associated prenyltransferase mpaA to yield farnesyl-DHMP (FDHMP). The ER-bound oxygenase mpaB then mediates the oxidative cleavage the C19-C20 double bond in FDHMP to yield FDHMP-3C via a mycophenolic aldehyde intermediate. The O-methyltransferase mpaG catalyzes the methylation of FDHMP-3C to yield MFDHMP-3C. After the cytosolic methylation of FDHMP-3C, MFDHMP-3C enters into peroxisomes probably via free diffusion due to its low molecular weight. Upon a peroxisomal CoA ligation reaction, catalyzed by a beta-oxidation component enzyme acyl-CoA ligase ACL891, MFDHMP-3C-CoA would then be restricted to peroxisomes for the following beta-oxidation pathway steps. The peroxisomal beta-oxidation machinery than converts MFDHMP-3C-CoA into MPA_CoA, via a beta-oxidation chain-shortening process. Finally mpaH acts as a peroxisomal acyl-CoA hydrolase with high substrate specificity toward MPA-CoA to release the final product MPA. In Penicillium roqueforti (strain FM164), this protein is Polyprenyl transferase mpaA.